The primary structure comprises 354 residues: Peptide chain release factor 1 (354 aa).

At glutamine 230 the chain carries N5-methylglutamine.

It belongs to the prokaryotic/mitochondrial release factor family. Post-translationally, methylated by PrmC. Methylation increases the termination efficiency of RF1.

The protein localises to the cytoplasm. Peptide chain release factor 1 directs the termination of translation in response to the peptide chain termination codons UAG and UAA. This chain is Peptide chain release factor 1, found in Leptospira interrogans serogroup Icterohaemorrhagiae serovar copenhageni (strain Fiocruz L1-130).